We begin with the raw amino-acid sequence, 231 residues long: SrfA-induced gene F protein (231 aa).

The sequence is that of SrfA-induced gene F protein (sigF) from Dictyostelium discoideum (Social amoeba).